The sequence spans 20 residues: Unknown protein NF019 from 2D-PAGE (20 aa).

The polypeptide is Unknown protein NF019 from 2D-PAGE (Naegleria fowleri (Brain eating amoeba)).